The following is a 280-amino-acid chain: Threonylcarbamoyl-AMP synthase (280 aa).

Residues 1–56 constitute a mitochondrion transit peptide; the sequence is MSTARPCAGLRAAVAAGMGLSDGPAGSSRGCRLLRPPAPAPALPGARLLRLPESEA. Ser-61 is subject to Phosphoserine. Residues 68–258 enclose the YrdC-like domain; that stretch reads TEALRAAVAE…KFGIIRSGCA (191 aa).

The protein belongs to the SUA5 family. Interacts with RSC1A1.

It is found in the cytoplasm. Its subcellular location is the mitochondrion. It localises to the cell membrane. It catalyses the reaction L-threonine + hydrogencarbonate + ATP = L-threonylcarbamoyladenylate + diphosphate + H2O. Cytoplasmic and mitochondrial threonylcarbamoyl-AMP synthase required for the formation of a threonylcarbamoyl group on adenosine at position 37 (t(6)A37) in tRNAs that read codons beginning with adenine. Catalyzes the conversion of L-threonine, HCO(3)(-)/CO(2) and ATP to give threonylcarbamoyl-AMP (TC-AMP) as the acyladenylate intermediate, with the release of diphosphate. Participates in t(6)A37 formation in cytoplasmic and mitochondrial tRNAs. May regulate the activity of some transporters. The protein is Threonylcarbamoyl-AMP synthase of Rattus norvegicus (Rat).